The sequence spans 475 residues: Erythroid membrane-associated protein (475 aa).

Positions M1 to G29 are cleaved as a signal peptide. The Ig-like V-type domain maps to H30–I140. At H30 to A155 the chain is on the extracellular side. A disulfide bridge connects residues C50 and C126. Residue N132 is glycosylated (N-linked (GlcNAc...) asparagine). A helical transmembrane segment spans residues V156–I176. Residues W177–F475 are Cytoplasmic-facing. The 199-residue stretch at K220–S418 folds into the B30.2/SPRY domain. S418 is subject to Phosphoserine.

It belongs to the immunoglobulin superfamily. BTN/MOG family. In terms of processing, glycosylated. Expressed in erythroid-enriched bone marrow (at protein level). Highly expressed in bone marrow and to a lower extent in leukocytes, thymus, lymph node and spleen.

It is found in the cell membrane. The protein resides in the cytoplasm. Functionally, possible role as a cell-adhesion or receptor molecule of erythroid cells. In Homo sapiens (Human), this protein is Erythroid membrane-associated protein (ERMAP).